The following is a 93-amino-acid chain: U8-theraphotoxin-Hs1b (93 aa).

A signal peptide spans 1-18 (MKAILLLAIFSVLTVAIC). 4 cysteine pairs are disulfide-bonded: cysteine 40–cysteine 54, cysteine 40–cysteine 81, cysteine 53–cysteine 66, and cysteine 84–cysteine 91.

Belongs to the neurotoxin 27 (Jztx-72) family. ICK-72 subfamily. Expressed by the venom gland.

It localises to the secreted. In terms of biological role, probable neurotoxin with ion channel impairing activity. This Cyriopagopus schmidti (Chinese bird spider) protein is U8-theraphotoxin-Hs1b.